The following is a 105-amino-acid chain: UPF0145 protein CCNA_02462 (105 aa).

Belongs to the UPF0145 family.

This Caulobacter vibrioides (strain NA1000 / CB15N) (Caulobacter crescentus) protein is UPF0145 protein CCNA_02462.